The sequence spans 184 residues: Oligoribonuclease (184 aa).

Residues 8–169 (LIWIDLEMTG…EDIHESIIEL (162 aa)) form the Exonuclease domain. Residue Y129 is part of the active site.

Belongs to the oligoribonuclease family.

It localises to the cytoplasm. Its function is as follows. 3'-to-5' exoribonuclease specific for small oligoribonucleotides. The sequence is that of Oligoribonuclease from Buchnera aphidicola subsp. Schizaphis graminum (strain Sg).